A 146-amino-acid polypeptide reads, in one-letter code: Angiogenin (146 aa).

Residues 1 to 24 form the signal peptide; that stretch reads MVMGLGLFLLVFMLGLGLTPPTLA. Glutamine 25 is modified (pyrrolidone carboxylic acid). The Proton acceptor role is filled by histidine 37. Position 45 (arginine 45) interacts with tRNA. 3 disulfide bridges follow: cysteine 50–cysteine 105, cysteine 63–cysteine 116, and cysteine 81–cysteine 131. Positions 55–59 match the Nucleolar localization signal motif; sequence RRRGL. 2 residues coordinate tRNA: cysteine 105 and isoleucine 127. Histidine 138 (proton donor) is an active-site residue.

Belongs to the pancreatic ribonuclease family. In terms of assembly, homodimer. Interacts with RNH1; inhibiting ANG ribonuclease activity. Interacts with PCNA.

Its subcellular location is the secreted. The protein localises to the nucleus. It is found in the nucleolus. The protein resides in the cytoplasm. It localises to the stress granule. Has weak tRNA ribonuclease activity by itself due to partial autoinhibition by its C-terminus, which folds into a short alpha-helix that partially occludes the substrate-binding site. In absence of stress, the ribonuclease activity is inhibited by RNH1 in the cytoplasm. In response to stress, dissociates from RNH1 in the cytoplasm and associates with cytoplasmic ribosomes with vacant A-sites: ribosomes directly activate the tRNA ribonuclease activity of ANG by refolding the C-terminal alpha-helix. In response to stress, the angiogenic activity of ANG is inhibited by RNH1 in the nucleus. Secreted ribonuclease that can either promote or restrict cell proliferation of target cells, depending on the context. Endocytosed in target cells via its receptor PLXNB2 and translocates to the cytoplasm or nucleus. Under stress conditions, localizes to the cytoplasm and promotes the assembly of stress granules (SGs): specifically cleaves a subset of tRNAs within anticodon loops to produce tRNA-derived stress-induced fragments (tiRNAs), resulting in translation repression and inhibition of cell proliferation. tiRNas also prevent formation of apoptosome, thereby promoting cell survival. Preferentially cleaves RNAs between a pyrimidine and an adenosine residue, suggesting that it cleaves the anticodon loop of tRNA(Ala) (32-UUAGCAU-38) after positions 33 and 36. Cleaves a subset of tRNAs, including tRNA(Ala), tRNA(Glu), tRNA(Gly), tRNA(Lys), tRNA(Val), tRNA(His), tRNA(Asp) and tRNA(Sec). Under growth conditions and in differentiated cells, translocates to the nucleus and stimulates ribosomal RNA (rRNA) transcription, including that containing the initiation site sequences of 45S rRNA, thereby promoting cell growth and proliferation. Angiogenin induces vascularization of normal and malignant tissues via its ability to promote rRNA transcription. Involved in hematopoietic stem and progenitor cell (HSPC) growth and survival by promoting rRNA transcription in growth conditions and inhibiting translation in response to stress, respectively. Mediates the crosstalk between myeloid and intestinal epithelial cells to protect the intestinal epithelial barrier integrity: secreted by myeloid cells and promotes intestinal epithelial cells proliferation and survival. Also mediates osteoclast-endothelial cell crosstalk in growing bone: produced by osteoclasts and protects the neighboring vascular cells against senescence by promoting rRNA transcription. This Rhinopithecus avunculus (Tonkin snub-nosed monkey) protein is Angiogenin (ANG).